Consider the following 508-residue polypeptide: WD repeat-containing protein DDB_G0290555 (508 aa).

4 WD repeats span residues threonine 32–glutamate 74, asparagine 159–serine 198, phenylalanine 252–serine 292, and aspartate 295–lysine 334. The tract at residues glutamate 368 to lysine 508 is disordered. The segment covering methionine 399 to asparagine 435 has biased composition (acidic residues). Positions isoleucine 436–serine 446 are enriched in basic and acidic residues. Positions aspartate 447–aspartate 456 are enriched in acidic residues. Low complexity predominate over residues asparagine 471 to threonine 493. A compositionally biased stretch (basic residues) spans leucine 497–lysine 508.

This is WD repeat-containing protein DDB_G0290555 from Dictyostelium discoideum (Social amoeba).